Consider the following 134-residue polypeptide: Natriuretic peptides B (134 aa).

Residues 1-26 (MDPQTAPSRALLLLLFLHLAFLGGRS) form the signal peptide. Ser-41 is a glycosylation site (O-linked (Xyl...) (chondroitin sulfate) serine). The O-linked (HexNAc...) threonine; Partial glycan is linked to Thr-62. Ser-63 and Ser-70 each carry an O-linked (HexNAc...) serine glycan. O-linked (HexNAc...) threonine glycosylation occurs at Thr-74. Ser-79 carries O-linked (HexNAc...) serine glycosylation. The O-linked (HexNAc...) threonine; Partial glycan is linked to Thr-84. A glycan (O-linked (HexNAc...) threonine) is linked at Thr-97. The cysteines at positions 112 and 128 are disulfide-linked.

It belongs to the natriuretic peptide family. Post-translationally, the precursor molecule is proteolytically cleaved by the endoproteases FURIN or CORIN at Arg-102 to produce brain natriuretic peptide 32 and NT-proBNP. This likely occurs after it has been secreted into the blood, either during circulation or in the target cells. CORIN also cleaves the precursor molecule at additional residues including Arg-99 and possibly Lys-105. In patients with heart failure, processing and degradation of natriuretic peptides B occurs but is delayed, possibly due to a decrease in enzyme level or activity of CORIN and DPP4. In terms of processing, undergoes further proteolytic cleavage by various proteases such as DPP4, MME and possibly FAP, to give rise to a variety of shorter peptides. Cleaved at Pro-104 by the prolyl endopeptidase FAP (seprase) activity (in vitro). Degraded by IDE. During IDE degradation, the resulting products initially increase the activation of NPR1 and can also stimulate NPR2 to produce cGMP before the fragments are completely degraded and inactivated by IDE (in vitro). O-glycosylated on at least seven residues. In cardiomyocytes, glycosylation at Thr-97 is essential for the stability and processing of the extracellular natriuretic peptides B. Glycosylation, especially at Thr-97, may also be important for brain natriuretic peptide 32 stability and/or extracellular distribution. Glycosylation at Thr-97 appears to inhibit FURIN- or CORIN-mediated proteolytic processing, at least in HEK293 cells. Detected in the cardiac atria (at protein level). Detected in the kidney distal tubular cells (at protein level).

The protein localises to the secreted. Cardiac hormone that plays a key role in mediating cardio-renal homeostasis. May also function as a paracrine antifibrotic factor in the heart. Acts by specifically binding and stimulating NPR1 to produce cGMP, which in turn activates effector proteins that drive various biological responses. Involved in regulating the extracellular fluid volume and maintaining the fluid-electrolyte balance through natriuresis, diuresis, vasorelaxation, and inhibition of renin and aldosterone secretion. Binds the clearance receptor NPR3. Functionally, may affect cardio-renal homeostasis. Able to promote the production of cGMP although its potency is very low compared to brain natriuretic peptide 32. In terms of biological role, may have a role in cardio-renal homeostasis. Able to promote the production of cGMP. This is Natriuretic peptides B (NPPB) from Homo sapiens (Human).